Consider the following 661-residue polypeptide: uncharacterized protein (661 aa).

The first 24 residues, 1-24 (MKTLKTLKIFIIVFIASVSLASFA), serve as a signal peptide directing secretion. Transmembrane regions (helical) follow at residues 226–246 (IIGA…ALNT), 254–274 (IALF…LGPL), 410–430 (IILA…LYFI), 436–456 (CMIT…MALF), 469–489 (VCIS…LLIT), and 562–582 (VVSI…FYYF). The disordered stretch occupies residues 629 to 661 (GKPLVGDKPGVGGKRKEGEQQGGDLASGSGGGK).

This sequence belongs to the TrbL/VirB6 family.

It localises to the cell membrane. This is an uncharacterized protein from Rickettsia conorii (strain ATCC VR-613 / Malish 7).